We begin with the raw amino-acid sequence, 673 residues long: Auxin response factor 9 (673 aa).

A DNA-binding region (TF-B3) is located at residues 126-228; it reads FCKTLTASDT…ELRVGVRRLM (103 aa). Disordered regions lie at residues 356–386 and 514–545; these read ELEP…PSVV and DSDQ…QSRQ. Residues 516 to 545 show a composition bias toward polar residues; that stretch reads DQISQPSNGNKSDAPGTSSERSPLESQSRQ. Positions 547–639 constitute a PB1 domain; the sequence is RSCTKVIMQG…EEAKLLAPKS (93 aa).

This sequence belongs to the ARF family. In terms of assembly, homodimers and heterodimers. In terms of tissue distribution, expressed in roots, culms, leaves and young panicles.

The protein localises to the nucleus. In terms of biological role, auxin response factors (ARFs) are transcriptional factors that bind specifically to the DNA sequence 5'-TGTCTC-3' found in the auxin-responsive promoter elements (AuxREs). The protein is Auxin response factor 9 (ARF9) of Oryza sativa subsp. japonica (Rice).